Here is a 488-residue protein sequence, read N- to C-terminus: Beta-1,3-glucan-binding protein (488 aa).

Positions 1–17 are cleaved as a signal peptide; the sequence is MFVTFICFLACLTCSYG. Residues 18–135 form a binds to curdlan, laminarihexaose and laminarin. The complex formation with laminarin induces self-association of the complexes into a macro structure, likely containing six protein and three laminarin molecules. The macro structures may form a platform on a microbial surface for recruitment of downstream proteases, as a means of amplification of the initial signal of pathogen recognition for the activation of the phenoloxidase cascade region; that stretch reads QPRAQQYVVP…GTPADTSLEP (118 aa). A binds to curdlan, lipopolysaccharide and lipoteichoic acid, activates the phenoloxidase cascade and is resistant to proteolytic degradation by trypsin or chymotrypsin, but is not as effective as the full-length protein in aggregation of microorganisms region spans residues 18-198; it reads QPRAQQYVVP…LKDLANWEAE (181 aa). The CBM39 domain occupies 24-123; sequence YVVPSAKLEA…GEWTVTEFVN (100 aa). Residues 24-127 are binds to laminarihexaose and laminarin; that stretch reads YVVPSAKLEA…VTEFVNEDGT (104 aa). Substrate contacts are provided by residues Asp72, 99-101, and Arg110; that span reads WTY. The disordered stretch occupies residues 125 to 158; the sequence is DGTPADTSLEPTTAPTPVRPDQPNQPIPTHRPDP. The span at 129-139 shows a compositional bias: polar residues; that stretch reads ADTSLEPTTAP. Residues 141 to 150 show a composition bias toward pro residues; the sequence is PVRPDQPNQP. One can recognise a GH16 domain in the interval 144–488; the sequence is PDQPNQPIPT…KVDYVRVYAL (345 aa). The binds to laminarin, but not to curdlan, does not activate the phenoloxidase cascade, is susceptible to proteinase digestion by trypsin or chymotrypsin and does not cause aggregation of microorganisms stretch occupies residues 199 to 488; sequence VKFPEEPDYP…KVDYVRVYAL (290 aa). Asn373 and Asn453 each carry an N-linked (GlcNAc...) asparagine glycan.

This sequence belongs to the insect beta-1,3-glucan binding protein family. In terms of assembly, monomer. Post-translationally, the N-terminus is blocked. Fat body and hemolymph.

Its subcellular location is the secreted. Functionally, involved in the recognition of invading microorganisms causing their aggregation. Activates the phenoloxidase cascade. Binds specifically to beta-1,3-glucan. Binds to curdlan, a linear water-insoluble beta-1,3-glucan polysaccharide, and to laminarin, a water-soluble beta-1,3-glucan polysaccharide containing beta-1,6 branches. Also binds to lipopolysaccharide and lipoteichoic acid. The chain is Beta-1,3-glucan-binding protein from Plodia interpunctella (Indianmeal moth).